The sequence spans 1021 residues: Chondroitin sulfate ABC endolyase (1021 aa).

Positions M1–A24 are cleaved as a signal peptide. 4 residues coordinate Na(+): H43, M70, Q73, and D211. The active-site Proton acceptor is H501. Y508 acts as the Proton donor in catalysis.

This sequence belongs to the polysaccharide lyase 8 family. As to quaternary structure, monomer.

Its subcellular location is the periplasm. It carries out the reaction Endolytic cleavage of (1-&gt;4)-beta-galactosaminic bonds between N-acetylgalactosamine and either D-glucuronic acid or L-iduronic acid to produce a mixture of Delta(4)-unsaturated oligosaccharides of different sizes that are ultimately degraded to Delta(4)-unsaturated tetra- and disaccharides.. With respect to regulation, is inhibited by Zn(2+), Ni(2+), Fe(2+) and Cu(2+). Its function is as follows. Endolytic, broad-specificity glycosaminoglycan lyase, which degrades the polysaccharides chondroitin, chondroitin-4-sulfate, chondroitin-6-sulfate, dermatan sulfate and to a lesser extent hyaluronan, by beta-elimination of 1,4-hexosaminidic bond to unsaturated tetrasaccharides and disaccharides. Is not active against keratan sulfate, heparan sulfate, and heparin. Is able to promote functional recovery in the injured central nervous system (CNS), via its role in the disruption of the normal organization of the extracellular matrix (ECM). This Proteus vulgaris protein is Chondroitin sulfate ABC endolyase.